A 765-amino-acid polypeptide reads, in one-letter code: Protein transport protein Sec23A (765 aa).

Cys-61, Cys-66, Cys-85, and Cys-88 together coordinate Zn(2+). The Gelsolin-like repeat unit spans residues 632–718; it reads PEPVLLDSSS…EHGGSQARFL (87 aa).

It belongs to the SEC23/SEC24 family. SEC23 subfamily. In terms of assembly, COPII is composed of at least five proteins: the Sec23/24 complex, the Sec13/31 complex and Sar1.

It is found in the cytoplasmic vesicle. Its subcellular location is the COPII-coated vesicle membrane. It localises to the endoplasmic reticulum membrane. The protein localises to the cytoplasm. The protein resides in the cytosol. Its function is as follows. Component of the coat protein complex II (COPII) which promotes the formation of transport vesicles from the endoplasmic reticulum (ER). The coat has two main functions, the physical deformation of the endoplasmic reticulum membrane into vesicles and the selection of cargo molecules for their transport to the Golgi complex. In Danio rerio (Zebrafish), this protein is Protein transport protein Sec23A.